The primary structure comprises 490 residues: Probable glycine dehydrogenase (decarboxylating) subunit 2 (490 aa).

The residue at position 273 (Lys-273) is an N6-(pyridoxal phosphate)lysine.

Belongs to the GcvP family. C-terminal subunit subfamily. As to quaternary structure, the glycine cleavage system is composed of four proteins: P, T, L and H. In this organism, the P 'protein' is a heterodimer of two subunits. Pyridoxal 5'-phosphate serves as cofactor.

The enzyme catalyses N(6)-[(R)-lipoyl]-L-lysyl-[glycine-cleavage complex H protein] + glycine + H(+) = N(6)-[(R)-S(8)-aminomethyldihydrolipoyl]-L-lysyl-[glycine-cleavage complex H protein] + CO2. Its function is as follows. The glycine cleavage system catalyzes the degradation of glycine. The P protein binds the alpha-amino group of glycine through its pyridoxal phosphate cofactor; CO(2) is released and the remaining methylamine moiety is then transferred to the lipoamide cofactor of the H protein. The protein is Probable glycine dehydrogenase (decarboxylating) subunit 2 of Staphylococcus aureus (strain bovine RF122 / ET3-1).